An 83-amino-acid chain; its full sequence is U5-theraphotoxin-Hs1a 1 (83 aa).

An N-terminal signal peptide occupies residues 1–21 (MKTSMFLTLTGLGLLFVVCYA). Residues 22 to 49 (SESEEKEFPKELLSSIFAADSDFKVEER) constitute a propeptide that is removed on maturation. 3 disulfides stabilise this stretch: Cys-51-Cys-63, Cys-56-Cys-68, and Cys-62-Cys-75.

It belongs to the neurotoxin 10 (Hwtx-1) family. 51 (Hntx-8) subfamily. Hntx-8 sub-subfamily. In terms of tissue distribution, expressed by the venom gland.

The protein localises to the secreted. Agglutinates human and mice erythrocytes. This activity can be specifically inhibited by mannosamine. This lectin shows very low toxicity in both mammals and insects. The polypeptide is U5-theraphotoxin-Hs1a 1 (Cyriopagopus schmidti (Chinese bird spider)).